We begin with the raw amino-acid sequence, 424 residues long: 3-isopropylmalate dehydratase large subunit (424 aa).

Residues cysteine 299, cysteine 359, and cysteine 362 each contribute to the [4Fe-4S] cluster site.

Belongs to the aconitase/IPM isomerase family. LeuC type 2 subfamily. In terms of assembly, heterodimer of LeuC and LeuD. It depends on [4Fe-4S] cluster as a cofactor.

It carries out the reaction (2R,3S)-3-isopropylmalate = (2S)-2-isopropylmalate. The protein operates within amino-acid biosynthesis; L-leucine biosynthesis; L-leucine from 3-methyl-2-oxobutanoate: step 2/4. Functionally, catalyzes the isomerization between 2-isopropylmalate and 3-isopropylmalate, via the formation of 2-isopropylmaleate. This chain is 3-isopropylmalate dehydratase large subunit, found in Hydrogenobaculum sp. (strain Y04AAS1).